Consider the following 398-residue polypeptide: NADH-quinone oxidoreductase subunit D (398 aa).

It belongs to the complex I 49 kDa subunit family. In terms of assembly, NDH-1 is composed of 14 different subunits. Subunits NuoB, C, D, E, F, and G constitute the peripheral sector of the complex.

It localises to the cell inner membrane. The enzyme catalyses a quinone + NADH + 5 H(+)(in) = a quinol + NAD(+) + 4 H(+)(out). Its function is as follows. NDH-1 shuttles electrons from NADH, via FMN and iron-sulfur (Fe-S) centers, to quinones in the respiratory chain. The immediate electron acceptor for the enzyme in this species is believed to be ubiquinone. Couples the redox reaction to proton translocation (for every two electrons transferred, four hydrogen ions are translocated across the cytoplasmic membrane), and thus conserves the redox energy in a proton gradient. The sequence is that of NADH-quinone oxidoreductase subunit D from Bradyrhizobium diazoefficiens (strain JCM 10833 / BCRC 13528 / IAM 13628 / NBRC 14792 / USDA 110).